Here is a 396-residue protein sequence, read N- to C-terminus: MTKLNAYFGEYGGQYVPQILVPALEQLEQAFIDAQEDPDFRSEFMGLLQEYAGRPTALTLTRNLTKGTKTKLYLKREDLLHGGAHKTNQVLGQALLAKRMGKNEIIAETGAGQHGVATALACALLGLKCRVYMGAKDVERQSPNVFRMKLMGATVIPVHSGSATLKDACNEALRDWSGSYETAHYLLGTAAGPHPFPTIVREFQRMIGEETKNQILAREGRLPDAVIACVGGGSNAIGMFADFIEEETVRLIGVEPAGKGIDTDQHGAPLKHGKTGIFFGMKAPLMQDENGQVEESYSVSAGLDFPSVGPQHAHLNAIGRAEYDSITDDEALDAFQELARSEGIIPALESSHALAHALKMARNNPEKEQLLVVNLSGRGDKDIFTVHAILEEKGAI.

An N6-(pyridoxal phosphate)lysine modification is found at Lys-86.

Belongs to the TrpB family. Tetramer of two alpha and two beta chains. Pyridoxal 5'-phosphate is required as a cofactor.

The catalysed reaction is (1S,2R)-1-C-(indol-3-yl)glycerol 3-phosphate + L-serine = D-glyceraldehyde 3-phosphate + L-tryptophan + H2O. It functions in the pathway amino-acid biosynthesis; L-tryptophan biosynthesis; L-tryptophan from chorismate: step 5/5. Its function is as follows. The beta subunit is responsible for the synthesis of L-tryptophan from indole and L-serine. The protein is Tryptophan synthase beta chain of Vibrio vulnificus (strain CMCP6).